We begin with the raw amino-acid sequence, 357 residues long: Phosphoribosylformylglycinamidine cyclo-ligase (357 aa).

Belongs to the AIR synthase family.

It is found in the cytoplasm. The enzyme catalyses 2-formamido-N(1)-(5-O-phospho-beta-D-ribosyl)acetamidine + ATP = 5-amino-1-(5-phospho-beta-D-ribosyl)imidazole + ADP + phosphate + H(+). The protein operates within purine metabolism; IMP biosynthesis via de novo pathway; 5-amino-1-(5-phospho-D-ribosyl)imidazole from N(2)-formyl-N(1)-(5-phospho-D-ribosyl)glycinamide: step 2/2. The protein is Phosphoribosylformylglycinamidine cyclo-ligase of Nitrobacter winogradskyi (strain ATCC 25391 / DSM 10237 / CIP 104748 / NCIMB 11846 / Nb-255).